We begin with the raw amino-acid sequence, 94 residues long: Cell division protein CrgA (94 aa).

The next 2 membrane-spanning stretches (helical) occupy residues 31 to 51 (VWFV…LLVF) and 71 to 91 (LGPW…LLTM).

The protein belongs to the CrgA family.

It localises to the cell membrane. In terms of biological role, involved in cell division. The sequence is that of Cell division protein CrgA from Mycobacterium sp. (strain JLS).